Consider the following 162-residue polypeptide: NADH-quinone oxidoreductase subunit I (162 aa).

4Fe-4S ferredoxin-type domains follow at residues 52–82 and 93–122; these read LRRYPNGEERCIACKLCEAICPAQAITIEAG and VRYDIDMVKCIYCGLCQEACPVDAIVEGPN. Positions 62, 65, 68, 72, 102, 105, 108, and 112 each coordinate [4Fe-4S] cluster.

The protein belongs to the complex I 23 kDa subunit family. As to quaternary structure, NDH-1 is composed of 14 different subunits. Subunits NuoA, H, J, K, L, M, N constitute the membrane sector of the complex. Requires [4Fe-4S] cluster as cofactor.

The protein localises to the cell inner membrane. The catalysed reaction is a quinone + NADH + 5 H(+)(in) = a quinol + NAD(+) + 4 H(+)(out). Functionally, NDH-1 shuttles electrons from NADH, via FMN and iron-sulfur (Fe-S) centers, to quinones in the respiratory chain. The immediate electron acceptor for the enzyme in this species is believed to be ubiquinone. Couples the redox reaction to proton translocation (for every two electrons transferred, four hydrogen ions are translocated across the cytoplasmic membrane), and thus conserves the redox energy in a proton gradient. This Afipia carboxidovorans (strain ATCC 49405 / DSM 1227 / KCTC 32145 / OM5) (Oligotropha carboxidovorans) protein is NADH-quinone oxidoreductase subunit I.